The chain runs to 382 residues: Glutaminyl-peptide cyclotransferase-like protein (382 aa).

The chain crosses the membrane as a helical span at residues 35–55; sequence LLPLLLALAVGSAFYTIWSGW. Residues cysteine 167 and cysteine 191 are joined by a disulfide bond. A Zn(2+)-binding site is contributed by aspartate 186. Glutamate 225 serves as the catalytic Proton acceptor. A Zn(2+)-binding site is contributed by glutamate 226. Aspartate 269 serves as the catalytic Proton acceptor. Residue histidine 351 coordinates Zn(2+).

This sequence belongs to the glutaminyl-peptide cyclotransferase family.

The protein localises to the golgi apparatus membrane. It carries out the reaction N-terminal L-glutaminyl-[peptide] = N-terminal 5-oxo-L-prolyl-[peptide] + NH4(+). Responsible for the biosynthesis of pyroglutamyl peptides. In Homo sapiens (Human), this protein is Glutaminyl-peptide cyclotransferase-like protein (QPCTL).